Here is a 168-residue protein sequence, read N- to C-terminus: Co-chaperone protein HscB homolog (168 aa).

Residues 5–77 (DYFSLFGLPS…MLRARYLCES (73 aa)) form the J domain.

It belongs to the HscB family. Interacts with HscA and stimulates its ATPase activity.

In terms of biological role, co-chaperone involved in the maturation of iron-sulfur cluster-containing proteins. Seems to help targeting proteins to be folded toward HscA. In Bordetella avium (strain 197N), this protein is Co-chaperone protein HscB homolog.